Here is a 244-residue protein sequence, read N- to C-terminus: EKC/KEOPS complex subunit Tp53rkb (244 aa).

The Protein kinase domain occupies 24–244; that stretch reads LSGLELVQQG…LRGRKRSMVG (221 aa). Residue Ser-25 is modified to Phosphoserine. Residues 30 to 38 and Lys-51 contribute to the ATP site; that span reads VQQGAEARV. A Nuclear localization signal motif is present at residues 69–86; the sequence is RRRTVQEARALLRCRRAG. Asp-153 functions as the Proton acceptor in the catalytic mechanism.

It belongs to the protein kinase superfamily. BUD32 family. Component of the EKC/KEOPS complex composed of at least GON7, TP53RK, TPRKB, OSGEP and LAGE3; the whole complex dimerizes.

It localises to the nucleus. It carries out the reaction L-seryl-[protein] + ATP = O-phospho-L-seryl-[protein] + ADP + H(+). The catalysed reaction is L-threonyl-[protein] + ATP = O-phospho-L-threonyl-[protein] + ADP + H(+). Component of the EKC/KEOPS complex that is required for the formation of a threonylcarbamoyl group on adenosine at position 37 (t(6)A37) in tRNAs that read codons beginning with adenine. The complex is probably involved in the transfer of the threonylcarbamoyl moiety of threonylcarbamoyl-AMP (TC-AMP) to the N6 group of A37. TP53RK has ATPase activity in the context of the EKC/KEOPS complex and likely plays a supporting role to the catalytic subunit OSGEP. Atypical protein kinase that phosphorylates 'Ser-15' of p53/TP53 protein and may therefore participate in its activation. This is EKC/KEOPS complex subunit Tp53rkb from Mus musculus (Mouse).